Consider the following 365-residue polypeptide: Iron-sulfur cluster assembly protein SufC (365 aa).

One can recognise an ABC transporter domain in the interval 118–364 (LEINDLHAIE…ESDGYAQFVE (247 aa)). Position 152–159 (152–159 (GRNGSGKS)) interacts with ATP.

The protein belongs to the ABC transporter superfamily. Ycf16 family. As to quaternary structure, component of a complex composed of SufB, SufC and SufD in a stoichiometric ratio of 1:2:1. Interacts with SufB. Interacts with SufD; the interaction enhances the ATPase activity of SufC.

The protein resides in the plastid. It is found in the apicoplast. The enzyme catalyses ATP + H2O = ADP + phosphate + H(+). The protein operates within cofactor biosynthesis; iron-sulfur cluster biosynthesis. In terms of biological role, participates in the sulfur mobilization (SUF) pathway for iron-sulfur (Fe-S) cluster biogenesis. As part of a complex consisting of SufB-SufC(2)-SufD, involved in assembly of [4Fe-4S] clusters. Exhibits ATPase activity. This chain is Iron-sulfur cluster assembly protein SufC, found in Plasmodium berghei (strain Anka).